We begin with the raw amino-acid sequence, 631 residues long: Phosphomethylpyrimidine synthase (631 aa).

Substrate-binding positions include Asn-239, Met-268, Tyr-297, His-333, 353–355 (SRG), 394–397 (DGLR), and Glu-433. Zn(2+) is bound at residue His-437. Tyr-460 contacts substrate. His-501 lines the Zn(2+) pocket. Residues Cys-581, Cys-584, and Cys-589 each contribute to the [4Fe-4S] cluster site.

This sequence belongs to the ThiC family. As to quaternary structure, homodimer. Requires [4Fe-4S] cluster as cofactor.

It carries out the reaction 5-amino-1-(5-phospho-beta-D-ribosyl)imidazole + S-adenosyl-L-methionine = 4-amino-2-methyl-5-(phosphooxymethyl)pyrimidine + CO + 5'-deoxyadenosine + formate + L-methionine + 3 H(+). It functions in the pathway cofactor biosynthesis; thiamine diphosphate biosynthesis. Catalyzes the synthesis of the hydroxymethylpyrimidine phosphate (HMP-P) moiety of thiamine from aminoimidazole ribotide (AIR) in a radical S-adenosyl-L-methionine (SAM)-dependent reaction. The sequence is that of Phosphomethylpyrimidine synthase from Ralstonia nicotianae (strain ATCC BAA-1114 / GMI1000) (Ralstonia solanacearum).